We begin with the raw amino-acid sequence, 244 residues long: 5-oxoprolinase subunit A (244 aa).

The protein belongs to the LamB/PxpA family. Forms a complex composed of PxpA, PxpB and PxpC.

The catalysed reaction is 5-oxo-L-proline + ATP + 2 H2O = L-glutamate + ADP + phosphate + H(+). Catalyzes the cleavage of 5-oxoproline to form L-glutamate coupled to the hydrolysis of ATP to ADP and inorganic phosphate. The chain is 5-oxoprolinase subunit A from Escherichia coli (strain SMS-3-5 / SECEC).